Reading from the N-terminus, the 381-residue chain is Peptidoglycan glycosyltransferase MrdB (381 aa).

The next 10 membrane-spanning stretches (helical) occupy residues 11 to 31, 40 to 60, 66 to 86, 102 to 122, 132 to 152, 156 to 176, 180 to 200, 263 to 283, 297 to 317, and 328 to 348; these read FDLL…LLIF, KQGV…FIPF, WLFA…FMGS, ITLQ…AHLI, YDWG…ALIL, DLGT…IVGL, VWLP…HFLH, FGFL…LHLF, IVAL…IAMT, and LPLF…FAIL.

The protein belongs to the SEDS family. MrdB/RodA subfamily.

Its subcellular location is the cell inner membrane. The enzyme catalyses [GlcNAc-(1-&gt;4)-Mur2Ac(oyl-L-Ala-gamma-D-Glu-L-Lys-D-Ala-D-Ala)](n)-di-trans,octa-cis-undecaprenyl diphosphate + beta-D-GlcNAc-(1-&gt;4)-Mur2Ac(oyl-L-Ala-gamma-D-Glu-L-Lys-D-Ala-D-Ala)-di-trans,octa-cis-undecaprenyl diphosphate = [GlcNAc-(1-&gt;4)-Mur2Ac(oyl-L-Ala-gamma-D-Glu-L-Lys-D-Ala-D-Ala)](n+1)-di-trans,octa-cis-undecaprenyl diphosphate + di-trans,octa-cis-undecaprenyl diphosphate + H(+). It functions in the pathway cell wall biogenesis; peptidoglycan biosynthesis. Its function is as follows. Peptidoglycan polymerase that is essential for cell wall elongation. This Helicobacter pylori (strain J99 / ATCC 700824) (Campylobacter pylori J99) protein is Peptidoglycan glycosyltransferase MrdB.